The following is a 536-amino-acid chain: MLDNFDKLNLQMRILIATAISLLFFIPYSYFFAPVKEAPLKESTSMERAEQQAAPQTSSSPKEGQVSSVAMAETSPSKDIIATVQGSHFRLEIDSLGRIAQVYLKDAKFLKEQKELPLLAPLSSLRPLEVRFSDATTNKEAFAKSYYSDRDLVEIRNTPETLTLTQELEGFKLTKKLTFYPDGNYDLEVETSGSQKRFFLSPGARPIAESDKFAFNGVVLKESGGTIHTTEDGDAKKDEIFEGARFVASVDRYYTTLFFVKEPQGLRVVISKNAEKNPEPFVEALDHLKLSGYIGAKDFRLLESIYPSLTDVVEYGFITFFAKPLFLLLDWLYKFCGNWGWAIVLLTLVVRIILFPLTYKGMVSMQKLKDIAPKMKEIQEKYKGDPQKLQVHMMELYKKHGANPMGGCLPLLLQMPIFFAIYRVLYNAIELKGADWILWINDLSVMDPYFILPILMGASMFLQQHLTPTTFTDPMQEKVFKFLPLIFTFFFVTFPSGLVLYWFVSNVFSIAQQLFINKTLEAKKRAAAAKPSGLSD.

The helical transmembrane segment at 14–34 threads the bilayer; sequence ILIATAISLLFFIPYSYFFAP. Residues 43 to 69 form a disordered region; the sequence is STSMERAEQQAAPQTSSSPKEGQVSSV. Residues 53-68 show a composition bias toward polar residues; sequence AAPQTSSSPKEGQVSS. Helical transmembrane passes span 312-332, 339-359, 401-421, 436-456, and 484-504; these read VVEY…LDWL, WGWA…PLTY, GANP…FFAI, WILW…PILM, and PLIF…YWFV.

The protein belongs to the OXA1/ALB3/YidC family. Type 1 subfamily. Interacts with the Sec translocase complex via SecD. Specifically interacts with transmembrane segments of nascent integral membrane proteins during membrane integration.

It localises to the cell inner membrane. In terms of biological role, required for the insertion and/or proper folding and/or complex formation of integral membrane proteins into the membrane. Involved in integration of membrane proteins that insert both dependently and independently of the Sec translocase complex, as well as at least some lipoproteins. Aids folding of multispanning membrane proteins. This is Membrane protein insertase YidC from Wolinella succinogenes (strain ATCC 29543 / DSM 1740 / CCUG 13145 / JCM 31913 / LMG 7466 / NCTC 11488 / FDC 602W) (Vibrio succinogenes).